The sequence spans 94 residues: MVAMVKVLVVAKVYPDSVERNLEEMVENIKKSLPEGYELLQYQKVPVAFGLNLLKVYVAMPEETEGGTEKLEEVLKGVEGVSEVEIETVHRMSY.

Belongs to the EF-1-beta/EF-1-delta family.

Functionally, promotes the exchange of GDP for GTP in EF-1-alpha/GDP, thus allowing the regeneration of EF-1-alpha/GTP that could then be used to form the ternary complex EF-1-alpha/GTP/AAtRNA. This chain is Elongation factor 1-beta, found in Ignicoccus hospitalis (strain KIN4/I / DSM 18386 / JCM 14125).